Reading from the N-terminus, the 349-residue chain is Crinkler effector protein 5 (349 aa).

The signal sequence occupies residues 1–17; that stretch reads MVKLFCSIVGVAGSPFS. Positions 18 to 57 are LQLFLAK domain; sequence VEVNEGKTVDDLKKAIKAENLDDPTLRNVAPKNLQLFLAK. A DWL domain region spans residues 58-108; sequence KGDAWLRYNEDLDTYLQSEIDTSSYLHMRASWKLSKPTLFGPDVSLGEDVV. The short motif at 109–115 is the HVLVXXP motif element; the sequence is HVLVVVP.

This sequence belongs to the Crinkler effector family.

The protein resides in the secreted. The protein localises to the host nucleus. Functionally, secreted effector that elicits necrosis in host plants, a characteristic of plant innate immunity. This chain is Crinkler effector protein 5, found in Phytophthora infestans (Potato late blight agent).